Consider the following 449-residue polypeptide: NADH-quinone oxidoreductase subunit D (449 aa).

Belongs to the complex I 49 kDa subunit family. NDH-1 is composed of 14 different subunits. Subunits NuoB, C, D, E, F, and G constitute the peripheral sector of the complex.

It is found in the cell membrane. It carries out the reaction a quinone + NADH + 5 H(+)(in) = a quinol + NAD(+) + 4 H(+)(out). In terms of biological role, NDH-1 shuttles electrons from NADH, via FMN and iron-sulfur (Fe-S) centers, to quinones in the respiratory chain. The immediate electron acceptor for the enzyme in this species is believed to be a menaquinone. Couples the redox reaction to proton translocation (for every two electrons transferred, four hydrogen ions are translocated across the cytoplasmic membrane), and thus conserves the redox energy in a proton gradient. In Saccharopolyspora erythraea (strain ATCC 11635 / DSM 40517 / JCM 4748 / NBRC 13426 / NCIMB 8594 / NRRL 2338), this protein is NADH-quinone oxidoreductase subunit D.